Consider the following 333-residue polypeptide: 4-hydroxythreonine-4-phosphate dehydrogenase (333 aa).

Residues H133 and T134 each contribute to the substrate site. The a divalent metal cation site is built by H169, H214, and H269. Substrate-binding residues include K277, N286, and R295.

It belongs to the PdxA family. Homodimer. Requires Zn(2+) as cofactor. The cofactor is Mg(2+). Co(2+) is required as a cofactor.

It is found in the cytoplasm. It catalyses the reaction 4-(phosphooxy)-L-threonine + NAD(+) = 3-amino-2-oxopropyl phosphate + CO2 + NADH. Its pathway is cofactor biosynthesis; pyridoxine 5'-phosphate biosynthesis; pyridoxine 5'-phosphate from D-erythrose 4-phosphate: step 4/5. Its function is as follows. Catalyzes the NAD(P)-dependent oxidation of 4-(phosphooxy)-L-threonine (HTP) into 2-amino-3-oxo-4-(phosphooxy)butyric acid which spontaneously decarboxylates to form 3-amino-2-oxopropyl phosphate (AHAP). This chain is 4-hydroxythreonine-4-phosphate dehydrogenase, found in Caulobacter vibrioides (strain ATCC 19089 / CIP 103742 / CB 15) (Caulobacter crescentus).